Consider the following 125-residue polypeptide: Small ribosomal subunit protein uS13 (125 aa).

Positions 95-125 are disordered; sequence GLPVRGQRTKNNCRTRKGKRKTVANKKKATK.

Belongs to the universal ribosomal protein uS13 family. As to quaternary structure, part of the 30S ribosomal subunit. Forms a loose heterodimer with protein S19. Forms two bridges to the 50S subunit in the 70S ribosome.

Functionally, located at the top of the head of the 30S subunit, it contacts several helices of the 16S rRNA. In the 70S ribosome it contacts the 23S rRNA (bridge B1a) and protein L5 of the 50S subunit (bridge B1b), connecting the 2 subunits; these bridges are implicated in subunit movement. Contacts the tRNAs in the A and P-sites. The sequence is that of Small ribosomal subunit protein uS13 from Cytophaga hutchinsonii (strain ATCC 33406 / DSM 1761 / CIP 103989 / NBRC 15051 / NCIMB 9469 / D465).